Consider the following 279-residue polypeptide: Putative pyruvate, phosphate dikinase regulatory protein (279 aa).

153-160 (GVSRTSKT) is a binding site for ADP.

Belongs to the pyruvate, phosphate/water dikinase regulatory protein family. PDRP subfamily.

The catalysed reaction is N(tele)-phospho-L-histidyl/L-threonyl-[pyruvate, phosphate dikinase] + ADP = N(tele)-phospho-L-histidyl/O-phospho-L-threonyl-[pyruvate, phosphate dikinase] + AMP + H(+). It carries out the reaction N(tele)-phospho-L-histidyl/O-phospho-L-threonyl-[pyruvate, phosphate dikinase] + phosphate + H(+) = N(tele)-phospho-L-histidyl/L-threonyl-[pyruvate, phosphate dikinase] + diphosphate. In terms of biological role, bifunctional serine/threonine kinase and phosphorylase involved in the regulation of the pyruvate, phosphate dikinase (PPDK) by catalyzing its phosphorylation/dephosphorylation. This is Putative pyruvate, phosphate dikinase regulatory protein from Rhodopseudomonas palustris (strain ATCC BAA-98 / CGA009).